The sequence spans 312 residues: Homoserine O-succinyltransferase (312 aa).

Residue cysteine 142 is the Acyl-thioester intermediate of the active site. 2 residues coordinate substrate: lysine 163 and serine 192. Residue histidine 235 is the Proton acceptor of the active site. Residue glutamate 237 is part of the active site. A substrate-binding site is contributed by arginine 249.

It belongs to the MetA family.

It localises to the cytoplasm. The catalysed reaction is L-homoserine + succinyl-CoA = O-succinyl-L-homoserine + CoA. It participates in amino-acid biosynthesis; L-methionine biosynthesis via de novo pathway; O-succinyl-L-homoserine from L-homoserine: step 1/1. Functionally, transfers a succinyl group from succinyl-CoA to L-homoserine, forming succinyl-L-homoserine. The sequence is that of Homoserine O-succinyltransferase from Aliivibrio salmonicida (strain LFI1238) (Vibrio salmonicida (strain LFI1238)).